A 130-amino-acid polypeptide reads, in one-letter code: Protein ApaG (130 aa).

The ApaG domain maps to 3-127 (KAETRGITVT…FSLDSPHLRR (125 aa)).

In Methylorubrum populi (strain ATCC BAA-705 / NCIMB 13946 / BJ001) (Methylobacterium populi), this protein is Protein ApaG.